We begin with the raw amino-acid sequence, 356 residues long: tRNA-specific 2-thiouridylase MnmA (356 aa).

Residues 6–13 and leucine 32 contribute to the ATP site; that span reads GMSGGVDS. Catalysis depends on cysteine 102, which acts as the Nucleophile. Residues cysteine 102 and cysteine 200 are joined by a disulfide bond. Glycine 127 contributes to the ATP binding site. Residues 150-152 form an interaction with tRNA region; it reads RDQ. Catalysis depends on cysteine 200, which acts as the Cysteine persulfide intermediate. The interval 302-303 is interaction with tRNA; it reads RY.

This sequence belongs to the MnmA/TRMU family.

The protein resides in the cytoplasm. It catalyses the reaction S-sulfanyl-L-cysteinyl-[protein] + uridine(34) in tRNA + AH2 + ATP = 2-thiouridine(34) in tRNA + L-cysteinyl-[protein] + A + AMP + diphosphate + H(+). Its function is as follows. Catalyzes the 2-thiolation of uridine at the wobble position (U34) of tRNA, leading to the formation of s(2)U34. In Aquifex aeolicus (strain VF5), this protein is tRNA-specific 2-thiouridylase MnmA.